The sequence spans 122 residues: MARIAGVNIPTNKRVVIALQYIHGIGPKFAREIVTKVGIADDRRVNQLSDAEVLQIREAIDADYQVEGDLRREVSMNIKRLMDLGCYRGLRHRRSLPVRGQRTHTNARTRKGPAKAIAGKKK.

The segment at 97–122 (PVRGQRTHTNARTRKGPAKAIAGKKK) is disordered.

This sequence belongs to the universal ribosomal protein uS13 family. In terms of assembly, part of the 30S ribosomal subunit. Forms a loose heterodimer with protein S19. Forms two bridges to the 50S subunit in the 70S ribosome.

In terms of biological role, located at the top of the head of the 30S subunit, it contacts several helices of the 16S rRNA. In the 70S ribosome it contacts the 23S rRNA (bridge B1a) and protein L5 of the 50S subunit (bridge B1b), connecting the 2 subunits; these bridges are implicated in subunit movement. Contacts the tRNAs in the A and P-sites. This Brucella anthropi (strain ATCC 49188 / DSM 6882 / CCUG 24695 / JCM 21032 / LMG 3331 / NBRC 15819 / NCTC 12168 / Alc 37) (Ochrobactrum anthropi) protein is Small ribosomal subunit protein uS13.